The chain runs to 385 residues: Cell division protein FtsZ (385 aa).

GTP-binding positions include 37 to 41 (GGGSN), 125 to 127 (GTG), glutamate 156, lysine 160, and aspartate 204.

The protein belongs to the FtsZ family. In terms of assembly, homodimer. Polymerizes to form a dynamic ring structure in a strictly GTP-dependent manner. Interacts directly with several other division proteins.

It is found in the cytoplasm. Essential cell division protein that forms a contractile ring structure (Z ring) at the future cell division site. The regulation of the ring assembly controls the timing and the location of cell division. One of the functions of the FtsZ ring is to recruit other cell division proteins to the septum to produce a new cell wall between the dividing cells. Binds GTP and shows GTPase activity. The polypeptide is Cell division protein FtsZ (Helicobacter pylori (strain ATCC 700392 / 26695) (Campylobacter pylori)).